Here is a 498-residue protein sequence, read N- to C-terminus: ATP synthase subunit beta, chloroplastic (498 aa).

Residue 172–179 (GGAGVGKT) coordinates ATP.

The protein belongs to the ATPase alpha/beta chains family. F-type ATPases have 2 components, CF(1) - the catalytic core - and CF(0) - the membrane proton channel. CF(1) has five subunits: alpha(3), beta(3), gamma(1), delta(1), epsilon(1). CF(0) has four main subunits: a(1), b(1), b'(1) and c(9-12).

The protein resides in the plastid. The protein localises to the chloroplast thylakoid membrane. It catalyses the reaction ATP + H2O + 4 H(+)(in) = ADP + phosphate + 5 H(+)(out). In terms of biological role, produces ATP from ADP in the presence of a proton gradient across the membrane. The catalytic sites are hosted primarily by the beta subunits. The protein is ATP synthase subunit beta, chloroplastic of Oryza nivara (Indian wild rice).